A 99-amino-acid chain; its full sequence is Accessory protein p12I (99 aa).

The short motif at 4–11 is the SH3-binding element; sequence RLLSPLSP. A helical transmembrane segment spans residues 12–32; it reads LALTALLLFLLSPGEVSGLLL. An SH3-binding motif is present at residues 33–38; it reads RPLPAP. A helical transmembrane segment spans residues 48 to 68; that stretch reads ILSNLLFLLFLPLFFSLPLLL. Short sequence motifs (SH3-binding) lie at residues 70–77 and 88–93; these read PSLPITMR and RAPSQP.

The protein belongs to the HTLV-1 accessory protein p12I family. In terms of assembly, p12I is a homodimer. Interacts with human CANX, CALR, ATP6V0C, IL2RB, IL2RG. Binds to MHC-I heavy chains HLA-A2, HLA-B7 and HLA-Cw4. Ubiquitinated; a fraction of P12I is degraded via the ubiquitin system.

The protein localises to the host endoplasmic reticulum membrane. Its subcellular location is the host Golgi apparatus. It is found in the host cis-Golgi network membrane. In terms of biological role, p12I is a modulator of T-lymphocyte proliferation and immune function and may contribute to establish a persistent infection. Binds and down-modulates cell surface expression of interleukin-2 receptors IL2RB and IL2RG. Also down-modulates cell surface MHC-I molecules by binding to free immature MHC-I heavy chains in the ER and targeting them to the proteasome for degradation. Binding to IL2RB mediates recruitment of JAK1 and JAK3. As a result of this interaction, p12I increases DNA-binding and transcriptional activity of STAT5. The chain is Accessory protein p12I from Homo sapiens (Human).